The following is a 365-amino-acid chain: Alanine racemase (365 aa).

Lys-32 functions as the Proton acceptor; specific for D-alanine in the catalytic mechanism. Residue Lys-32 is modified to N6-(pyridoxal phosphate)lysine. Substrate is bound at residue Arg-128. Tyr-257 functions as the Proton acceptor; specific for L-alanine in the catalytic mechanism. Met-305 contacts substrate.

It belongs to the alanine racemase family. Pyridoxal 5'-phosphate serves as cofactor.

The catalysed reaction is L-alanine = D-alanine. It functions in the pathway amino-acid biosynthesis; D-alanine biosynthesis; D-alanine from L-alanine: step 1/1. Its function is as follows. Catalyzes the interconversion of L-alanine and D-alanine. May also act on other amino acids. In Francisella tularensis subsp. holarctica (strain LVS), this protein is Alanine racemase (alr).